Consider the following 576-residue polypeptide: RING finger and SPRY domain-containing protein 1 (576 aa).

Residues 1–16 form the signal peptide; sequence MIVLGWAVFLASRSLG. Ser50 carries the post-translational modification Phosphoserine. The segment at 50-99 is disordered; sequence SGTDDSVDTQQQQAENSAVPTADTRSQPRDPVRPPRRGRGPHEPRRKKQN. A compositionally biased stretch (polar residues) spans 57 to 68; that stretch reads DTQQQQAENSAV. Residues 83–97 show a composition bias toward basic residues; that stretch reads PPRRGRGPHEPRRKK. Residues 300–483 enclose the B30.2/SPRY domain; the sequence is LFLKEGRQLT…CEFNFGAKPF (184 aa). Asn314 carries N-linked (GlcNAc...) asparagine glycosylation. An RING-type zinc finger spans residues 527 to 562; that stretch reads CSLCCDEVADTQLKPCGHSDLCMDCALQLETCPLCR.

The protein localises to the secreted. This Macaca fascicularis (Crab-eating macaque) protein is RING finger and SPRY domain-containing protein 1 (RSPRY1).